The primary structure comprises 169 residues: NADH-quinone oxidoreductase subunit I (169 aa).

4Fe-4S ferredoxin-type domains lie at 61-90 (RRYD…IESE) and 100-129 (TRYD…ETHI). Positions 70, 73, 76, 80, 109, 112, 115, and 119 each coordinate [4Fe-4S] cluster.

It belongs to the complex I 23 kDa subunit family. NDH-1 is composed of 14 different subunits. Subunits NuoA, H, J, K, L, M, N constitute the membrane sector of the complex. The cofactor is [4Fe-4S] cluster.

Its subcellular location is the cell inner membrane. It carries out the reaction a quinone + NADH + 5 H(+)(in) = a quinol + NAD(+) + 4 H(+)(out). NDH-1 shuttles electrons from NADH, via FMN and iron-sulfur (Fe-S) centers, to quinones in the respiratory chain. The immediate electron acceptor for the enzyme in this species is believed to be ubiquinone. Couples the redox reaction to proton translocation (for every two electrons transferred, four hydrogen ions are translocated across the cytoplasmic membrane), and thus conserves the redox energy in a proton gradient. The protein is NADH-quinone oxidoreductase subunit I of Verminephrobacter eiseniae (strain EF01-2).